The following is a 287-amino-acid chain: Nucleotide-binding protein Sfri_3380 (287 aa).

Gly-8–Ser-15 is an ATP binding site. Residue Asp-56–Asn-59 participates in GTP binding.

This sequence belongs to the RapZ-like family.

In terms of biological role, displays ATPase and GTPase activities. This is Nucleotide-binding protein Sfri_3380 from Shewanella frigidimarina (strain NCIMB 400).